Reading from the N-terminus, the 163-residue chain is SsrA-binding protein (163 aa).

Belongs to the SmpB family.

It localises to the cytoplasm. Required for rescue of stalled ribosomes mediated by trans-translation. Binds to transfer-messenger RNA (tmRNA), required for stable association of tmRNA with ribosomes. tmRNA and SmpB together mimic tRNA shape, replacing the anticodon stem-loop with SmpB. tmRNA is encoded by the ssrA gene; the 2 termini fold to resemble tRNA(Ala) and it encodes a 'tag peptide', a short internal open reading frame. During trans-translation Ala-aminoacylated tmRNA acts like a tRNA, entering the A-site of stalled ribosomes, displacing the stalled mRNA. The ribosome then switches to translate the ORF on the tmRNA; the nascent peptide is terminated with the 'tag peptide' encoded by the tmRNA and targeted for degradation. The ribosome is freed to recommence translation, which seems to be the essential function of trans-translation. In Corynebacterium diphtheriae (strain ATCC 700971 / NCTC 13129 / Biotype gravis), this protein is SsrA-binding protein.